The sequence spans 204 residues: Protein GrpE (204 aa).

The span at 1-12 shows a compositional bias: basic and acidic residues; sequence MSNEEQAQKDDA. Residues 1–32 form a disordered region; sequence MSNEEQAQKDDAQPVNEAAIDATAEQADAEVE. Over residues 17–26 the composition is skewed to low complexity; sequence EAAIDATAEQ.

It belongs to the GrpE family. In terms of assembly, homodimer.

Its subcellular location is the cytoplasm. Participates actively in the response to hyperosmotic and heat shock by preventing the aggregation of stress-denatured proteins, in association with DnaK and GrpE. It is the nucleotide exchange factor for DnaK and may function as a thermosensor. Unfolded proteins bind initially to DnaJ; upon interaction with the DnaJ-bound protein, DnaK hydrolyzes its bound ATP, resulting in the formation of a stable complex. GrpE releases ADP from DnaK; ATP binding to DnaK triggers the release of the substrate protein, thus completing the reaction cycle. Several rounds of ATP-dependent interactions between DnaJ, DnaK and GrpE are required for fully efficient folding. The polypeptide is Protein GrpE (Pseudoalteromonas atlantica (strain T6c / ATCC BAA-1087)).